The sequence spans 294 residues: Phosphoribosylaminoimidazole-succinocarboxamide synthase (294 aa).

The protein belongs to the SAICAR synthetase family.

It catalyses the reaction 5-amino-1-(5-phospho-D-ribosyl)imidazole-4-carboxylate + L-aspartate + ATP = (2S)-2-[5-amino-1-(5-phospho-beta-D-ribosyl)imidazole-4-carboxamido]succinate + ADP + phosphate + 2 H(+). It functions in the pathway purine metabolism; IMP biosynthesis via de novo pathway; 5-amino-1-(5-phospho-D-ribosyl)imidazole-4-carboxamide from 5-amino-1-(5-phospho-D-ribosyl)imidazole-4-carboxylate: step 1/2. The polypeptide is Phosphoribosylaminoimidazole-succinocarboxamide synthase (Rhodococcus opacus (strain B4)).